Consider the following 192-residue polypeptide: 7-methyl-GTP pyrophosphatase (192 aa).

The Proton acceptor role is filled by Asp-69.

It belongs to the Maf family. YceF subfamily. It depends on a divalent metal cation as a cofactor.

It is found in the cytoplasm. The enzyme catalyses N(7)-methyl-GTP + H2O = N(7)-methyl-GMP + diphosphate + H(+). Nucleoside triphosphate pyrophosphatase that hydrolyzes 7-methyl-GTP (m(7)GTP). May have a dual role in cell division arrest and in preventing the incorporation of modified nucleotides into cellular nucleic acids. This chain is 7-methyl-GTP pyrophosphatase, found in Pseudomonas syringae pv. syringae (strain B728a).